The chain runs to 145 residues: Transcription antitermination protein NusB (145 aa).

Belongs to the NusB family.

In terms of biological role, involved in transcription antitermination. Required for transcription of ribosomal RNA (rRNA) genes. Binds specifically to the boxA antiterminator sequence of the ribosomal RNA (rrn) operons. The chain is Transcription antitermination protein NusB from Thiobacillus denitrificans (strain ATCC 25259 / T1).